Consider the following 309-residue polypeptide: Homoserine O-acetyltransferase (309 aa).

Cys142 functions as the Acyl-thioester intermediate in the catalytic mechanism. Residues Lys163 and Ser192 each coordinate substrate. His235 functions as the Proton acceptor in the catalytic mechanism. The active site involves Glu237. Arg249 contacts substrate.

The protein belongs to the MetA family.

The protein resides in the cytoplasm. The catalysed reaction is L-homoserine + acetyl-CoA = O-acetyl-L-homoserine + CoA. It participates in amino-acid biosynthesis; L-methionine biosynthesis via de novo pathway; O-acetyl-L-homoserine from L-homoserine: step 1/1. Transfers an acetyl group from acetyl-CoA to L-homoserine, forming acetyl-L-homoserine. In Methanomethylophilus alvi (strain Mx1201), this protein is Homoserine O-acetyltransferase.